The primary structure comprises 191 residues: Protein GrpE (191 aa).

Basic and acidic residues predominate over residues Met-1–Thr-10. The segment at Met-1–Val-28 is disordered.

Belongs to the GrpE family. As to quaternary structure, homodimer.

It localises to the cytoplasm. In terms of biological role, participates actively in the response to hyperosmotic and heat shock by preventing the aggregation of stress-denatured proteins, in association with DnaK and GrpE. It is the nucleotide exchange factor for DnaK and may function as a thermosensor. Unfolded proteins bind initially to DnaJ; upon interaction with the DnaJ-bound protein, DnaK hydrolyzes its bound ATP, resulting in the formation of a stable complex. GrpE releases ADP from DnaK; ATP binding to DnaK triggers the release of the substrate protein, thus completing the reaction cycle. Several rounds of ATP-dependent interactions between DnaJ, DnaK and GrpE are required for fully efficient folding. The chain is Protein GrpE from Aeromonas salmonicida (strain A449).